Consider the following 310-residue polypeptide: Syntaxin-related protein KNOLLE (310 aa).

An N-acetylmethionine modification is found at M1. The Cytoplasmic segment spans residues 1–283; the sequence is MNDLMTKSFM…AKSHQRNSRK (283 aa). Positions 94–159 form a coiled coil; it reads NEIVSGLRKA…FQGLRQKMMS (66 aa). In terms of domain architecture, t-SNARE coiled-coil homology spans 212-274; that stretch reads VVEIQDRYDA…ADGANELKTA (63 aa). A helical; Anchor for type IV membrane protein transmembrane segment spans residues 284–304; it reads WMCIGIIVLLLIILIVVIPII. Residues 305 to 310 are Vesicular-facing; that stretch reads TSFSSS.

It belongs to the syntaxin family. As to quaternary structure, interacts with SNAP33 and/or NPSN11 to form a t-SNARE complex and with KEULE. In terms of tissue distribution, abundant in flowers and developing siliques. A low level expression is seen in the seedlings, roots, and leaves.

It localises to the membrane. Involved in cytokinesis. Acts as a cell plate-specific syntaxin, required for the fusion of vesicles at the plane of cell division. The sequence is that of Syntaxin-related protein KNOLLE (KN) from Arabidopsis thaliana (Mouse-ear cress).